The chain runs to 249 residues: 5'-nucleotidase SurE (249 aa).

The a divalent metal cation site is built by D8, D9, S39, and N91.

This sequence belongs to the SurE nucleotidase family. A divalent metal cation is required as a cofactor.

Its subcellular location is the cytoplasm. The enzyme catalyses a ribonucleoside 5'-phosphate + H2O = a ribonucleoside + phosphate. Its function is as follows. Nucleotidase that shows phosphatase activity on nucleoside 5'-monophosphates. In Pseudomonas putida (strain ATCC 47054 / DSM 6125 / CFBP 8728 / NCIMB 11950 / KT2440), this protein is 5'-nucleotidase SurE.